Consider the following 324-residue polypeptide: Homoserine kinase (324 aa).

Residue 87–97 (PVARGMGSSAA) participates in ATP binding.

The protein belongs to the GHMP kinase family. Homoserine kinase subfamily.

The protein resides in the cytoplasm. The catalysed reaction is L-homoserine + ATP = O-phospho-L-homoserine + ADP + H(+). Its pathway is amino-acid biosynthesis; L-threonine biosynthesis; L-threonine from L-aspartate: step 4/5. In terms of biological role, catalyzes the ATP-dependent phosphorylation of L-homoserine to L-homoserine phosphate. This chain is Homoserine kinase, found in Symbiobacterium thermophilum (strain DSM 24528 / JCM 14929 / IAM 14863 / T).